The primary structure comprises 187 residues: Putative AgrB-like protein 1 (187 aa).

5 consecutive transmembrane segments (helical) span residues 29–49 (VVIV…IAGI), 50–70 (LGYF…KPFI), 81–98 (CFIA…LVTF), 103–120 (LFSI…IYNK), and 149–169 (ILFL…TITW).

This sequence belongs to the AgrB family.

The protein localises to the cell membrane. May be involved in the proteolytic processing of a quorum sensing system signal molecule precursor. The chain is Putative AgrB-like protein 1 from Clostridium perfringens (strain 13 / Type A).